The primary structure comprises 174 residues: Gamma-crystallin D (174 aa).

Beta/gamma crystallin 'Greek key' domains follow at residues 2–40 (GKIT…RVDS) and 41–83 (GCWM…RIIP). Positions 84–87 (YSGS) are connecting peptide. Beta/gamma crystallin 'Greek key' domains lie at 88 to 128 (HKMR…NVLD) and 129 to 171 (GCWI…RRVI).

This sequence belongs to the beta/gamma-crystallin family. Monomer.

Crystallins are the dominant structural components of the vertebrate eye lens. This chain is Gamma-crystallin D (CRYGD), found in Macropus fuliginosus (Western gray kangaroo).